Here is a 453-residue protein sequence, read N- to C-terminus: MSENMEELWSKTLEELKQQLSKPSFETWFQSTEPVEMSSTDLYISVPNEFTKDWLNSRYKNSIENSLKKISGKQLKIKFLLPGEKIKMEEQNNENEEKPESTSKKSSQGSEHTTWLNPKYTFDTFVIGNANRFAHAASLAVAEAPAKAYNPLFIYGGVGLGKTHLMHAIGHYVLSHQPNYRVVYISSEKFTNEFINAIRDNKTVNFRNKYRNVDILLVDDIQFLAGKEQTQEEFFHTFNTLHENDKQIIISSDRPPKEIPTLEDRLRSRFEWGLITDIQAPDLETRIAILRKKAYLEKLDIPNDVIVYIANQIDTNIRELEGGLIRVIAYSSMANKKITKETAEEALKDILPNKQPKKMTVEHIQKTVAQYFGLKVDDLKAKKRTRSVAFPRQIAMYLARELTDSSLPKIGDEFGGRDHTTVMHAHDKIASDLKKESHLNETIDEIKNLLHGD.

The domain I, interacts with DnaA modulators stretch occupies residues 1–75 (MSENMEELWS…SLKKISGKQL (75 aa)). The tract at residues 75–114 (LKIKFLLPGEKIKMEEQNNENEEKPESTSKKSSQGSEHTT) is domain II. Basic and acidic residues predominate over residues 87-103 (KMEEQNNENEEKPESTS). Residues 87–112 (KMEEQNNENEEKPESTSKKSSQGSEH) are disordered. Positions 115–331 (WLNPKYTFDT…GGLIRVIAYS (217 aa)) are domain III, AAA+ region. ATP is bound by residues glycine 159, glycine 161, lysine 162, and threonine 163. A domain IV, binds dsDNA region spans residues 332-453 (SMANKKITKE…DEIKNLLHGD (122 aa)).

Belongs to the DnaA family. Oligomerizes as a right-handed, spiral filament on DNA at oriC.

The protein resides in the cytoplasm. Plays an essential role in the initiation and regulation of chromosomal replication. ATP-DnaA binds to the origin of replication (oriC) to initiate formation of the DNA replication initiation complex once per cell cycle. Binds the DnaA box (a 9 base pair repeat at the origin) and separates the double-stranded (ds)DNA. Forms a right-handed helical filament on oriC DNA; dsDNA binds to the exterior of the filament while single-stranded (ss)DNA is stabiized in the filament's interior. The ATP-DnaA-oriC complex binds and stabilizes one strand of the AT-rich DNA unwinding element (DUE), permitting loading of DNA polymerase. After initiation quickly degrades to an ADP-DnaA complex that is not apt for DNA replication. Binds acidic phospholipids. The polypeptide is Chromosomal replication initiator protein DnaA (Natranaerobius thermophilus (strain ATCC BAA-1301 / DSM 18059 / JW/NM-WN-LF)).